A 388-amino-acid polypeptide reads, in one-letter code: Processive diacylglycerol beta-glucosyltransferase (388 aa).

The protein belongs to the glycosyltransferase 28 family. UgtP subfamily.

It is found in the cell membrane. It carries out the reaction a 1,2-diacyl-3-O-(beta-D-glucopyranosyl)-sn-glycerol + UDP-alpha-D-glucose = a 1,2-diacyl-3-O-(beta-D-Glc-(1-&gt;6)-beta-D-Glc)-sn-glycerol + UDP + H(+). The catalysed reaction is a 1,2-diacyl-3-O-(beta-D-Glc-(1-&gt;6)-beta-D-Glc)-sn-glycerol + UDP-alpha-D-glucose = a 1,2-diacyl-3-O-(beta-D-Glc-(1-&gt;6)-beta-D-Glc-(1-&gt;6)-beta-D-Glc)-sn-glycerol + UDP + H(+). It catalyses the reaction a 1,2-diacyl-sn-glycerol + UDP-alpha-D-glucose = a 1,2-diacyl-3-O-(beta-D-glucopyranosyl)-sn-glycerol + UDP + H(+). It functions in the pathway glycolipid metabolism; diglucosyl-diacylglycerol biosynthesis. Processive glucosyltransferase involved in the biosynthesis of both the bilayer- and non-bilayer-forming membrane glucolipids. Is able to successively transfer up to three glucosyl residues to diacylglycerol (DAG), thereby catalyzing the formation of beta-monoglucosyl-DAG (3-O-(beta-D-glucopyranosyl)-1,2-diacyl-sn-glycerol), beta-diglucosyl-DAG (3-O-(beta-D-glucopyranosyl-beta-(1-&gt;6)-D-glucopyranosyl)-1,2-diacyl-sn-glycerol) and beta-triglucosyl-DAG (3-O-(beta-D-glucopyranosyl-beta-(1-&gt;6)-D-glucopyranosyl-beta-(1-&gt;6)-D-glucopyranosyl)-1,2-diacyl-sn-glycerol). Beta-diglucosyl-DAG is the predominant glycolipid found in Bacillales and is also used as a membrane anchor for lipoteichoic acid (LTA). The chain is Processive diacylglycerol beta-glucosyltransferase from Bacillus cereus (strain B4264).